Here is a 481-residue protein sequence, read N- to C-terminus: Probable glycine dehydrogenase (decarboxylating) subunit 2 (481 aa).

Positions Met-1–Val-23 are disordered. Position 263 is an N6-(pyridoxal phosphate)lysine (Lys-263).

The protein belongs to the GcvP family. C-terminal subunit subfamily. The glycine cleavage system is composed of four proteins: P, T, L and H. In this organism, the P 'protein' is a heterodimer of two subunits. It depends on pyridoxal 5'-phosphate as a cofactor.

It catalyses the reaction N(6)-[(R)-lipoyl]-L-lysyl-[glycine-cleavage complex H protein] + glycine + H(+) = N(6)-[(R)-S(8)-aminomethyldihydrolipoyl]-L-lysyl-[glycine-cleavage complex H protein] + CO2. Its function is as follows. The glycine cleavage system catalyzes the degradation of glycine. The P protein binds the alpha-amino group of glycine through its pyridoxal phosphate cofactor; CO(2) is released and the remaining methylamine moiety is then transferred to the lipoamide cofactor of the H protein. The chain is Probable glycine dehydrogenase (decarboxylating) subunit 2 from Francisella philomiragia subsp. philomiragia (strain ATCC 25017 / CCUG 19701 / FSC 153 / O#319-036).